We begin with the raw amino-acid sequence, 129 residues long: Large ribosomal subunit protein bL17 (129 aa).

Belongs to the bacterial ribosomal protein bL17 family. Part of the 50S ribosomal subunit. Contacts protein L32.

This chain is Large ribosomal subunit protein bL17, found in Buchnera aphidicola subsp. Baizongia pistaciae (strain Bp).